Here is a 553-residue protein sequence, read N- to C-terminus: Formate--tetrahydrofolate ligase (553 aa).

Position 62–69 (62–69 (TPAGEGKS)) interacts with ATP.

The protein belongs to the formate--tetrahydrofolate ligase family.

The enzyme catalyses (6S)-5,6,7,8-tetrahydrofolate + formate + ATP = (6R)-10-formyltetrahydrofolate + ADP + phosphate. The protein operates within one-carbon metabolism; tetrahydrofolate interconversion. This Limosilactobacillus reuteri subsp. reuteri (strain JCM 1112) (Lactobacillus reuteri) protein is Formate--tetrahydrofolate ligase.